We begin with the raw amino-acid sequence, 303 residues long: Acetaldehyde dehydrogenase 1 (303 aa).

Catalysis depends on cysteine 130, which acts as the Acyl-thioester intermediate. Residues 161-169 (SVGPGTRKN) and asparagine 272 contribute to the NAD(+) site.

Belongs to the acetaldehyde dehydrogenase family.

It carries out the reaction acetaldehyde + NAD(+) + CoA = acetyl-CoA + NADH + H(+). The chain is Acetaldehyde dehydrogenase 1 from Cupriavidus metallidurans (strain ATCC 43123 / DSM 2839 / NBRC 102507 / CH34) (Ralstonia metallidurans).